We begin with the raw amino-acid sequence, 338 residues long: Anthranilate phosphoribosyltransferase (338 aa).

Residues Gly82, 85 to 86 (GD), Thr90, 92 to 95 (NIST), 110 to 118 (KHGNRAASS), and Ser122 contribute to the 5-phospho-alpha-D-ribose 1-diphosphate site. Gly82 provides a ligand contact to anthranilate. Ser94 serves as a coordination point for Mg(2+). Anthranilate is bound at residue Asn113. Residue Arg168 participates in anthranilate binding. Residues Asp226 and Glu227 each contribute to the Mg(2+) site.

Belongs to the anthranilate phosphoribosyltransferase family. Homodimer. It depends on Mg(2+) as a cofactor.

It carries out the reaction N-(5-phospho-beta-D-ribosyl)anthranilate + diphosphate = 5-phospho-alpha-D-ribose 1-diphosphate + anthranilate. It participates in amino-acid biosynthesis; L-tryptophan biosynthesis; L-tryptophan from chorismate: step 2/5. Its function is as follows. Catalyzes the transfer of the phosphoribosyl group of 5-phosphorylribose-1-pyrophosphate (PRPP) to anthranilate to yield N-(5'-phosphoribosyl)-anthranilate (PRA). The sequence is that of Anthranilate phosphoribosyltransferase from Deinococcus radiodurans (strain ATCC 13939 / DSM 20539 / JCM 16871 / CCUG 27074 / LMG 4051 / NBRC 15346 / NCIMB 9279 / VKM B-1422 / R1).